Reading from the N-terminus, the 254-residue chain is DNA repair protein RecO (254 aa).

This sequence belongs to the RecO family.

Its function is as follows. Involved in DNA repair and RecF pathway recombination. This chain is DNA repair protein RecO, found in Anaeromyxobacter sp. (strain K).